The following is a 238-amino-acid chain: ATP synthase subunit a (238 aa).

A run of 5 helical transmembrane segments spans residues 18-38 (LTILAMSLLTITIIFILVFWA), 75-95 (YSLLMFILFSFVFVANNLGLM), 112-132 (NFGVDITLSLLVAFICHIEGI), 179-199 (VVTGLLLQLAVLSPFTGPLAF), and 203-223 (IVWTAFSMFIGFIQAYVFIIL).

It belongs to the ATPase A chain family. As to quaternary structure, F-type ATPases have 2 components, CF(1) - the catalytic core - and CF(0) - the membrane proton channel. CF(1) has five subunits: alpha(3), beta(3), gamma(1), delta(1), epsilon(1). CF(0) has three main subunits: a(1), b(2) and c(9-12). The alpha and beta chains form an alternating ring which encloses part of the gamma chain. CF(1) is attached to CF(0) by a central stalk formed by the gamma and epsilon chains, while a peripheral stalk is formed by the delta and b chains.

Its subcellular location is the cell membrane. Functionally, key component of the proton channel; it plays a direct role in the translocation of protons across the membrane. This Streptococcus agalactiae serotype III (strain NEM316) protein is ATP synthase subunit a.